The following is an 837-amino-acid chain: Protein translocase subunit SecA (837 aa).

Residues Gln-85, 103-107, and Asp-493 contribute to the ATP site; that span reads GEGKT. Cys-821, Cys-823, Cys-832, and His-833 together coordinate Zn(2+).

This sequence belongs to the SecA family. Monomer and homodimer. Part of the essential Sec protein translocation apparatus which comprises SecA, SecYEG and auxiliary proteins SecDF. Other proteins may also be involved. It depends on Zn(2+) as a cofactor.

It localises to the cell membrane. The protein localises to the cytoplasm. It carries out the reaction ATP + H2O + cellular proteinSide 1 = ADP + phosphate + cellular proteinSide 2.. Its function is as follows. Part of the Sec protein translocase complex. Interacts with the SecYEG preprotein conducting channel. Has a central role in coupling the hydrolysis of ATP to the transfer of proteins into and across the cell membrane, serving as an ATP-driven molecular motor driving the stepwise translocation of polypeptide chains across the membrane. The chain is Protein translocase subunit SecA from Streptococcus pneumoniae (strain P1031).